The primary structure comprises 379 residues: 1-deoxy-D-xylulose 5-phosphate reductoisomerase (379 aa).

Positions 10, 11, 12, 13, 38, 39, and 121 each coordinate NADPH. Residue Lys-122 coordinates 1-deoxy-D-xylulose 5-phosphate. Residue Glu-123 coordinates NADPH. Asp-147 contacts Mn(2+). Positions 148, 149, 173, and 196 each coordinate 1-deoxy-D-xylulose 5-phosphate. Residue Glu-149 coordinates Mn(2+). Gly-202 lines the NADPH pocket. 1-deoxy-D-xylulose 5-phosphate-binding residues include Ser-209, Asn-214, Lys-215, and Glu-218. Glu-218 contacts Mn(2+).

Belongs to the DXR family. Mg(2+) is required as a cofactor. It depends on Mn(2+) as a cofactor.

The catalysed reaction is 2-C-methyl-D-erythritol 4-phosphate + NADP(+) = 1-deoxy-D-xylulose 5-phosphate + NADPH + H(+). Its pathway is isoprenoid biosynthesis; isopentenyl diphosphate biosynthesis via DXP pathway; isopentenyl diphosphate from 1-deoxy-D-xylulose 5-phosphate: step 1/6. Its function is as follows. Catalyzes the NADPH-dependent rearrangement and reduction of 1-deoxy-D-xylulose-5-phosphate (DXP) to 2-C-methyl-D-erythritol 4-phosphate (MEP). This chain is 1-deoxy-D-xylulose 5-phosphate reductoisomerase, found in Chlamydia trachomatis serovar L2 (strain ATCC VR-902B / DSM 19102 / 434/Bu).